A 178-amino-acid chain; its full sequence is UPF0114 protein in repA1-repA2 intergenic region (178 aa).

A run of 3 helical transmembrane segments spans residues 14–34 (WLIF…TLKF), 53–73 (LILV…LVMV), and 136–156 (WYVI…YIDR).

The protein belongs to the UPF0114 family.

Its subcellular location is the cell membrane. In Buchnera aphidicola subsp. Tetraneura caerulescens, this protein is UPF0114 protein in repA1-repA2 intergenic region.